The sequence spans 210 residues: Dynactin-associated protein (210 aa).

Over 1–113 (MVADIKGNEQ…YCRNDWSMWK (113 aa)) the chain is Cytoplasmic. The chain crosses the membrane as a helical; Signal-anchor for type II membrane protein span at residues 114–134 (VFLACLLACVIMTAIGVLIIC). At 135–210 (LVNNKGSANS…PITVAPTDHL (76 aa)) the chain is on the extracellular side. Residues 168–210 (ACPPTMTTTSTVPASTATESTTSTATAATTSTEPITVAPTDHL) are disordered. Residues 171–203 (PTMTTTSTVPASTATESTTSTATAATTSTEPIT) are compositionally biased toward low complexity.

As to quaternary structure, interacts with DCTN1 and DCTN2. As to expression, expressed in fibroblast and numerous cancer cell lines (at protein level).

The protein localises to the golgi apparatus membrane. It localises to the cell membrane. Functionally, plays a role in the regulation of cell proliferation. Promotes activation of the AKT1 signaling pathway. Promotes phosphorylation of AKT1 at 'Ser-473'. The sequence is that of Dynactin-associated protein (DYNAP) from Homo sapiens (Human).